A 2603-amino-acid chain; its full sequence is Ankyrin repeat domain-containing protein 17 (2603 aa).

The residue at position 1 (methionine 1) is an N-acetylmethionine. 2 stretches are compositionally biased toward low complexity: residues 1-34 (MEKA…AAAE) and 42-53 (SSRARSASSPRG). The interval 1-143 (MEKATVPVAA…SFILDQDDLE (143 aa)) is disordered. Residues serine 19 and serine 50 each carry the phosphoserine modification. Over residues 63–79 (KKKPPQQQHHKAKRNRT) the composition is skewed to basic residues. Residues 84–94 (SSSESSSDSDN) are compositionally biased toward low complexity. Gly residues predominate over residues 95 to 111 (SGGGGGGGGGGGGGGGT). A compositionally biased stretch (acidic residues) spans 116–131 (SEEEEDDDDEEEEVSE). Position 156 is a phosphoserine (serine 156). ANK repeat units follow at residues 233–262 (SDNR…SVNE), 266–295 (EGES…NVED), 300–329 (GDIT…DVNA), 333–362 (TGNT…SIED), 366–395 (NGHT…GINT), 400–429 (FKES…DQEH), 433–462 (EMHT…QVNM), 466–495 (SFES…SLEE), 499–528 (EGYT…NINA), 533–562 (TQET…DIEL), 563–592 (GCST…NVHA), 596–625 (TGDT…DLEH), 629–658 (GGRT…NVNR), 663–692 (NDHT…DPTH), and 696–725 (DGST…NLLS). Lysine 318 participates in a covalent cross-link: Glycyl lysine isopeptide (Lys-Gly) (interchain with G-Cter in SUMO2). At serine 803 the chain carries Phosphoserine. ANK repeat units follow at residues 1082–1111 (NHDT…SIEH), 1115–1144 (KGFT…DIEA), 1149–1178 (TKDT…NKEH), 1182–1211 (SDYT…EINS), 1217–1246 (LGIS…DINA), 1251–1280 (NRNT…NVEH), 1284–1313 (TGLT…DVNA), 1319–1348 (SRDT…HIDV), 1352–1381 (KGNT…DVDA), and 1385–1414 (RKIT…QFPS). Residues 1442 to 1526 (VQAKDRQAAE…EKEKLKVEDE (85 aa)) are a coiled coil. At serine 1457 the chain carries Phosphoserine. 2 disordered regions span residues 1479 to 1500 (AKRE…RKLE) and 1517 to 1717 (EKEK…QKRE). Over residues 1481 to 1491 (REKRKEKRRKK) the composition is skewed to basic residues. Composition is skewed to low complexity over residues 1531 to 1550 (TEPP…TWTT), 1602 to 1611 (ESKSSSTSES), and 1620 to 1632 (SSCS…SNSS). Phosphoserine occurs at positions 1635 and 1639. 2 stretches are compositionally biased toward polar residues: residues 1642 to 1652 (VVTTTVSSKKQ) and 1675 to 1703 (LSET…SPNG). 3 positions are modified to phosphoserine: serine 1696, serine 1700, and serine 1709. The KH domain maps to 1725–1789 (RRSKKVSVPS…ESTRQATQLI (65 aa)). Arginine 1874 carries the post-translational modification Asymmetric dimethylarginine. 3 disordered regions span residues 1906-1995 (PRLP…PSVR), 2011-2192 (TTVT…HKNS), and 2273-2332 (VVSS…YGSV). 2 stretches are compositionally biased toward low complexity: residues 1950–1995 (SNQN…PSVR) and 2011–2028 (TTVT…TNAT). Residues serine 2042, serine 2044, serine 2045, serine 2047, serine 2059, and serine 2067 each carry the phosphoserine modification. The span at 2066–2078 (ASPNKVASSSEQE) shows a compositional bias: polar residues. The span at 2095-2106 (SSSSSGSSSAHS) shows a compositional bias: low complexity. Polar residues-rich tracts occupy residues 2107 to 2127 (NQQQ…QQSQ) and 2273 to 2303 (VVSS…SDTS). Positions 2308–2318 (FRPPLQRPAPS) are enriched in pro residues. Phosphoserine occurs at positions 2373 and 2401. The segment at 2381-2423 (CSSASNDSSAQSVSSGVRAPSPAPSSVPLGSEKPSNVSQDRKV) is disordered. The span at 2382–2411 (SSASNDSSAQSVSSGVRAPSPAPSSVPLGS) shows a compositional bias: low complexity.

Interacts (via N-terminus) with NOD2. Interacts with CDK2, MCM3, MCM5, MCM7, CDC6 and PCNA. Interacts with MAVS and IFIH1. Interacts (via the second ankyrin repeat cluster) with DDX58. In terms of assembly, (Microbial infection) Interacts with enterovirus 71/EV71 capsid protein VP1. Phosphorylated by CDK2. As to expression, ubiquitously expressed.

Its subcellular location is the cytoplasm. It localises to the nucleus. Its function is as follows. Could play pivotal roles in cell cycle and DNA regulation. Involved in innate immune defense against viruse by positively regulating the viral dsRNA receptors DDX58 and IFIH1 signaling pathways. Involves in NOD2- and NOD1-mediated responses to bacteria suggesting a role in innate antibacterial immune pathways too. Target of enterovirus 71 which is the major etiological agent of HFMD (hand, foot and mouth disease). Could play a central role for the formation and/or maintenance of the blood vessels of the circulation system. The chain is Ankyrin repeat domain-containing protein 17 (ANKRD17) from Homo sapiens (Human).